Consider the following 135-residue polypeptide: MLRTMLKSKIHRATVTQSDLHYVGSVTIDADLMDAADLIEGEQVTIVDIDNGNRLVTYAITGARGSGVIGINGAAAHLVHPGDLVILIAYGTMEDAEARAYQPRVVFVDADNRQVHLGADPAMVPDTAVDLMSPR.

The active-site Schiff-base intermediate with substrate; via pyruvic acid is S25. S25 carries the pyruvic acid (Ser) modification. T57 contacts substrate. The Proton donor role is filled by Y58. 73-75 contacts substrate; the sequence is GAA.

This sequence belongs to the PanD family. In terms of assembly, heterooctamer of four alpha and four beta subunits. Requires pyruvate as cofactor. In terms of processing, is synthesized initially as an inactive proenzyme, which is activated by self-cleavage at a specific serine bond to produce a beta-subunit with a hydroxyl group at its C-terminus and an alpha-subunit with a pyruvoyl group at its N-terminus.

Its subcellular location is the cytoplasm. It catalyses the reaction L-aspartate + H(+) = beta-alanine + CO2. Its pathway is cofactor biosynthesis; (R)-pantothenate biosynthesis; beta-alanine from L-aspartate: step 1/1. In terms of biological role, catalyzes the pyruvoyl-dependent decarboxylation of aspartate to produce beta-alanine. This Mycobacterium sp. (strain JLS) protein is Aspartate 1-decarboxylase.